The chain runs to 503 residues: Cytochrome P450 7A1 (503 aa).

The helical transmembrane segment at 4–24 (ISLIWGIAVVVSCCIWFIIGI) threads the bilayer. Cys-444 contacts heme.

Belongs to the cytochrome P450 family. It depends on heme as a cofactor.

Its subcellular location is the endoplasmic reticulum membrane. The protein resides in the microsome membrane. The catalysed reaction is cholesterol + reduced [NADPH--hemoprotein reductase] + O2 = 7alpha-hydroxycholesterol + oxidized [NADPH--hemoprotein reductase] + H2O + H(+). It catalyses the reaction 4beta-hydroxycholesterol + reduced [NADPH--hemoprotein reductase] + O2 = 4beta,7alpha-dihydroxycholesterol + oxidized [NADPH--hemoprotein reductase] + H2O + H(+). It carries out the reaction lathosterol + reduced [NADPH--hemoprotein reductase] + O2 = 7alpha,8alpha-epoxy-5alpha-cholestan-3beta-ol + oxidized [NADPH--hemoprotein reductase] + H2O + H(+). The enzyme catalyses lathosterol + reduced [NADPH--hemoprotein reductase] + O2 = 5alpha-cholestan-7-oxo-3beta-ol + oxidized [NADPH--hemoprotein reductase] + H2O + H(+). The catalysed reaction is 7-dehydrocholesterol + reduced [NADPH--hemoprotein reductase] + O2 = 7-oxocholesterol + oxidized [NADPH--hemoprotein reductase] + H2O + H(+). It catalyses the reaction (24S)-hydroxycholesterol + reduced [NADPH--hemoprotein reductase] + O2 = (24S)-7alpha-dihydroxycholesterol + oxidized [NADPH--hemoprotein reductase] + H2O + H(+). It carries out the reaction (24R)-hydroxycholesterol + reduced [NADPH--hemoprotein reductase] + O2 = (24R)-7alpha-dihydroxycholesterol + oxidized [NADPH--hemoprotein reductase] + H2O + H(+). It participates in lipid metabolism; bile acid biosynthesis. The protein operates within steroid metabolism; cholesterol degradation. Functionally, a cytochrome P450 monooxygenase involved in the metabolism of endogenous cholesterol and its oxygenated derivatives (oxysterols). Mechanistically, uses molecular oxygen inserting one oxygen atom into a substrate, and reducing the second into a water molecule, with two electrons provided by NADPH via cytochrome P450 reductase (CPR; NADPH-ferrihemoprotein reductase). Functions as a critical regulatory enzyme of bile acid biosynthesis and cholesterol homeostasis. Catalyzes the hydroxylation of carbon hydrogen bond at 7-alpha position of cholesterol, a rate-limiting step in cholesterol catabolism and bile acid biosynthesis. 7-alpha hydroxylates several oxysterols, including 4beta-hydroxycholesterol and 24-hydroxycholesterol. Catalyzes the oxidation of the 7,8 double bond of 7-dehydrocholesterol and lathosterol with direct and predominant formation of the 7-keto derivatives. This chain is Cytochrome P450 7A1, found in Mus musculus (Mouse).